A 318-amino-acid chain; its full sequence is Electron transfer flavoprotein subunit alpha (318 aa).

257–285 (LYIALGISGAIQHRAGMQTSKTIVAVNKD) contributes to the FAD binding site.

This sequence belongs to the ETF alpha-subunit/FixB family. As to quaternary structure, heterodimer of an alpha and a beta subunit. FAD is required as a cofactor.

In terms of biological role, the electron transfer flavoprotein serves as a specific electron acceptor for other dehydrogenases. It transfers the electrons to the main respiratory chain via ETF-ubiquinone oxidoreductase (ETF dehydrogenase). The chain is Electron transfer flavoprotein subunit alpha (etfA) from Mycobacterium leprae (strain TN).